Consider the following 126-residue polypeptide: Protein ApaG (126 aa).

Positions 2–126 constitute an ApaG domain; that stretch reads SDTQHQVNVR…FRLAVPGALH (125 aa).

This chain is Protein ApaG, found in Pseudomonas paraeruginosa (strain DSM 24068 / PA7) (Pseudomonas aeruginosa (strain PA7)).